A 244-amino-acid polypeptide reads, in one-letter code: 23S rRNA (guanosine-2'-O-)-methyltransferase RlmB (244 aa).

Gly196, Ile216, and Leu225 together coordinate S-adenosyl-L-methionine.

This sequence belongs to the class IV-like SAM-binding methyltransferase superfamily. RNA methyltransferase TrmH family. RlmB subfamily. Homodimer.

It localises to the cytoplasm. The catalysed reaction is guanosine(2251) in 23S rRNA + S-adenosyl-L-methionine = 2'-O-methylguanosine(2251) in 23S rRNA + S-adenosyl-L-homocysteine + H(+). In terms of biological role, specifically methylates the ribose of guanosine 2251 in 23S rRNA. In Pectobacterium atrosepticum (strain SCRI 1043 / ATCC BAA-672) (Erwinia carotovora subsp. atroseptica), this protein is 23S rRNA (guanosine-2'-O-)-methyltransferase RlmB.